The sequence spans 341 residues: Glycerol-3-phosphate dehydrogenase [NAD(P)+] (341 aa).

Ser-14, Phe-15, Arg-35, and Lys-108 together coordinate NADPH. Positions 108 and 136 each coordinate sn-glycerol 3-phosphate. Ala-140 is a binding site for NADPH. Lys-191, Asp-244, Ser-254, Arg-255, and Asn-256 together coordinate sn-glycerol 3-phosphate. Lys-191 functions as the Proton acceptor in the catalytic mechanism. Residue Arg-255 participates in NADPH binding. Val-279 and Glu-281 together coordinate NADPH.

It belongs to the NAD-dependent glycerol-3-phosphate dehydrogenase family.

The protein resides in the cytoplasm. It catalyses the reaction sn-glycerol 3-phosphate + NAD(+) = dihydroxyacetone phosphate + NADH + H(+). The catalysed reaction is sn-glycerol 3-phosphate + NADP(+) = dihydroxyacetone phosphate + NADPH + H(+). Its pathway is membrane lipid metabolism; glycerophospholipid metabolism. In terms of biological role, catalyzes the reduction of the glycolytic intermediate dihydroxyacetone phosphate (DHAP) to sn-glycerol 3-phosphate (G3P), the key precursor for phospholipid synthesis. This is Glycerol-3-phosphate dehydrogenase [NAD(P)+] from Pseudomonas fluorescens (strain SBW25).